The following is a 366-amino-acid chain: Protein lifeguard 1 (366 aa).

The tract at residues 1 to 141 (MSHEKSFLVS…GPPSYYDNQD (141 aa)) is disordered. Pro residues-rich tracts occupy residues 14–44 (YPPP…PFQP) and 67–109 (GPYP…PNPY). 7 helical membrane passes run 160 to 180 (VFLV…VFTF), 192 to 212 (VWTY…LSCC), 223 to 243 (LVAL…IASF), 248 to 268 (AVIM…IFSM), 278 to 298 (VGVL…CIFI), 302 to 322 (VLEI…LAVD), and 341 to 361 (FAAL…LTII).

It belongs to the BI1 family. LFG subfamily.

It is found in the membrane. Potential apoptotic regulator. This is Protein lifeguard 1 (GRINA) from Bos taurus (Bovine).